The primary structure comprises 134 residues: Flagellar basal-body rod protein FlgC (134 aa).

It belongs to the flagella basal body rod proteins family. As to quaternary structure, the basal body constitutes a major portion of the flagellar organelle and consists of four rings (L,P,S, and M) mounted on a central rod. The rod consists of about 26 subunits of FlgG in the distal portion, and FlgB, FlgC and FlgF are thought to build up the proximal portion of the rod with about 6 subunits each.

It localises to the bacterial flagellum basal body. This chain is Flagellar basal-body rod protein FlgC (flgC), found in Salmonella typhi.